A 227-amino-acid polypeptide reads, in one-letter code: 2-C-methyl-D-erythritol 4-phosphate cytidylyltransferase (227 aa).

The protein belongs to the IspD/TarI cytidylyltransferase family. IspD subfamily.

The catalysed reaction is 2-C-methyl-D-erythritol 4-phosphate + CTP + H(+) = 4-CDP-2-C-methyl-D-erythritol + diphosphate. Its pathway is isoprenoid biosynthesis; isopentenyl diphosphate biosynthesis via DXP pathway; isopentenyl diphosphate from 1-deoxy-D-xylulose 5-phosphate: step 2/6. Functionally, catalyzes the formation of 4-diphosphocytidyl-2-C-methyl-D-erythritol from CTP and 2-C-methyl-D-erythritol 4-phosphate (MEP). In Caldanaerobacter subterraneus subsp. tengcongensis (strain DSM 15242 / JCM 11007 / NBRC 100824 / MB4) (Thermoanaerobacter tengcongensis), this protein is 2-C-methyl-D-erythritol 4-phosphate cytidylyltransferase.